Here is a 65-residue protein sequence, read N- to C-terminus: Hirudin-2B (65 aa).

Residues 1 to 3 (ITY) are interaction with thrombin active site. 3 disulfides stabilise this stretch: Cys-6/Cys-14, Cys-16/Cys-28, and Cys-22/Cys-39. A disordered region spans residues 39-65 (CVTGEGTPKPQSHNDGDFEEIPEEYLQ). O-linked (GalNAc...) threonine glycosylation occurs at Thr-45. Residues 55–65 (DFEEIPEEYLQ) are interaction with fibrinogen-binding exosite of thrombin. The span at 55 to 65 (DFEEIPEEYLQ) shows a compositional bias: acidic residues. The residue at position 63 (Tyr-63) is a Sulfotyrosine.

The protein belongs to the protease inhibitor I14 (hirudin) family.

Its subcellular location is the secreted. Its function is as follows. Hirudin is a potent thrombin-specific protease inhibitor. It forms a stable non-covalent complex with alpha-thrombin, thereby abolishing its ability to cleave fibrinogen. The chain is Hirudin-2B from Hirudo medicinalis (Medicinal leech).